Consider the following 860-residue polypeptide: Protein argonaute-2 (860 aa).

The interval 1 to 30 is disordered; that stretch reads MYSGAGPALAPPAPPPPPIQGYAFKPPPRP. 3'-nitrotyrosine is present on Tyr2. Over residues 9–30 the composition is skewed to pro residues; it reads LAPPAPPPPPIQGYAFKPPPRP. The region spanning 230 to 349 is the PAZ domain; the sequence is PVIEFVCEVL…LPLEVCNIVA (120 aa). The tract at residues 312–317 is interaction with guide RNA; it reads YFKDRH. The residue at position 388 (Ser388) is a Phosphoserine. The Piwi domain occupies 518-819; the sequence is LVVVILPGKT…VAFRARYHLV (302 aa). The tract at residues 525 to 567 is interaction with guide RNA; it reads GKTPVYAEVKRVGDTVLGMATQCVQMKNVQRTTPQTLSNLWLK. The interval 588–591 is interaction with GW182 family members; it reads FQQP. Asp598 lines the a divalent metal cation pocket. Residues 651–661 are interaction with GW182 family members; the sequence is LIQFYKSTRFK. An a divalent metal cation-binding site is contributed by Asp670. Pro701 carries the 4-hydroxyproline modification. 3 interaction with guide RNA regions span residues 710 to 711, 754 to 762, and 791 to 813; these read KR, HAGIQGTSR, and YVRC…VAFR. His808 contacts a divalent metal cation. Phosphoserine is present on residues Ser825, Ser829, Ser832, and Ser835.

Belongs to the argonaute family. Ago subfamily. As to quaternary structure, interacts with DICER1 through its Piwi domain and with TARBP2 during assembly of the RNA-induced silencing complex (RISC). Together, DICER1, AGO2 and TARBP2 constitute the trimeric RISC loading complex (RLC), or micro-RNA (miRNA) loading complex (miRLC). Within the RLC/miRLC, DICER1 and TARBP2 are required to process precursor miRNAs (pre-miRNAs) to mature miRNAs and then load them onto AGO2. AGO2 bound to the mature miRNA constitutes the minimal RISC and may subsequently dissociate from DICER1 and TARBP2. Note however that the term RISC has also been used to describe the trimeric RLC/miRLC. The formation of RISC complexes containing siRNAs rather than miRNAs appears to occur independently of DICER1. Interacts with AGO1. Also interacts with DDB1, DDX5, DDX6, DDX20, DHX30, DHX36, DDX47, DHX9, ELAVL, FXR1, GEMIN4, HNRNPF, IGF2BP1, ILF3, IMP8, MATR3, PABPC1, PRMT5, P4HA1, P4HB, RBM4, SART3, TNRC6A, TNRC6B, UPF1 and YBX1. Interacts with the P-body components DCP1A and XRN1. Associates with polysomes and messenger ribonucleoproteins (mNRPs). Interacts with RBM4; the interaction is modulated under stress-induced conditions, occurs under both cell proliferation and differentiation conditions and in an RNA- and phosphorylation-independent manner. Interacts with LIMD1, WTIP and AJUBA. Interacts with TRIM71; the interaction increases in presence of RNA. Interacts with APOBEC3G in an RNA-dependent manner. Interacts with APOBEC3A, APOBEC3C, APOBEC3F and APOBEC3H. Interacts with DICER1, TARBP2, EIF6, MOV10 and RPL7A (60S ribosome subunit); they form a large RNA-induced silencing complex (RISC). Interacts with FMR1. Interacts with ZFP36. Interacts with RC3H1; the interaction is RNA independent. Found in a complex composed of AGO2, CHD7 and ARB2A. Interacts with SND1 and SYT11. Interacts with CLNK. Interacts with GARRE1. Interacts with GRB2; this interaction is important for the formation of a ternary complex containing GRB2, AGO2 and DICER1. It depends on Mg(2+) as a cofactor. The cofactor is Mn(2+). In terms of processing, hydroxylated. 4-hydroxylation appears to enhance protein stability but is not required for miRNA-binding or endonuclease activity. Post-translationally, ubiquitinated on surface-exposed lysines by a SCF-like E3 ubiquitin-protein ligase complex containing ZSWIM8 during target-directed microRNA degradation (TDMD), a process that mediates degradation of microRNAs (miRNAs). Ubiquitination by the SCF-like E3 ubiquitin-protein ligase complex containing ZSWIM8 leads to its subsequent degradation, thereby exposing miRNAs for degradation. ZSWIM8 recognizes and binds AGO2 when it is engaged with a TDMD target. Phosphorylation at Ser-388 by AKT3; leads to up-regulate translational repression of microRNA target and down-regulate endonucleolytic cleavage. In terms of processing, a phosphorylation cycle of C-terminal serine cluster (Ser-825-Ser-835) regulates the release of target mRNAs. Target-binding leads to phosphorylation of these residues by CSNK1A1, which reduces the affinity of AGO2 for mRNA and enables target release. The ANKRD52-PPP6C phosphatase complex dephosphorylates the residues, which primes AGO2 for binding a new target.

It localises to the cytoplasm. Its subcellular location is the P-body. The protein resides in the nucleus. It catalyses the reaction Endonucleolytic cleavage to 5'-phosphomonoester.. Required for RNA-mediated gene silencing (RNAi) by the RNA-induced silencing complex (RISC). The 'minimal RISC' appears to include AGO2 bound to a short guide RNA such as a microRNA (miRNA) or short interfering RNA (siRNA). These guide RNAs direct RISC to complementary mRNAs that are targets for RISC-mediated gene silencing. The precise mechanism of gene silencing depends on the degree of complementarity between the miRNA or siRNA and its target. Binding of RISC to a perfectly complementary mRNA generally results in silencing due to endonucleolytic cleavage of the mRNA specifically by AGO2. Binding of RISC to a partially complementary mRNA results in silencing through inhibition of translation, and this is independent of endonuclease activity. May inhibit translation initiation by binding to the 7-methylguanosine cap, thereby preventing the recruitment of the translation initiation factor eIF4-E. May also inhibit translation initiation via interaction with EIF6, which itself binds to the 60S ribosomal subunit and prevents its association with the 40S ribosomal subunit. The inhibition of translational initiation leads to the accumulation of the affected mRNA in cytoplasmic processing bodies (P-bodies), where mRNA degradation may subsequently occur. In some cases RISC-mediated translational repression is also observed for miRNAs that perfectly match the 3' untranslated region (3'-UTR). Can also up-regulate the translation of specific mRNAs under certain growth conditions. Binds to the AU element of the 3'-UTR of the TNF (TNF-alpha) mRNA and up-regulates translation under conditions of serum starvation. Also required for transcriptional gene silencing (TGS), in which short RNAs known as antigene RNAs or agRNAs direct the transcriptional repression of complementary promoter regions. In Bos taurus (Bovine), this protein is Protein argonaute-2 (AGO2).